The primary structure comprises 247 residues: MYKLVLIRHGESTWNLENRFTGWTDVELTPTGVSQAQQAGRLLKEGGYEFDIAYTSVLKRAIWTLWHALDQMDRTWLPVAHSWRLNERHYGALQGLNKGDMAKQYGDAQVLIWRRSYDTPPPALEADDPRGQRQDVRYAKLDAEQVPLTECLKDTVARVLPFWNDSIAPAILSGKRVLIAAHGNSIRAMVKYLDGISDADIVNLNIPNGVPLVYELDADLKPIRSYYLGDAEAVAKAAAAVANQGKA.

Residues Arg8–Asn15, Thr21–Gly22, Arg60, Glu87–Tyr90, Lys98, Arg114–Arg115, and Gly183–Asn184 each bind substrate. The active-site Tele-phosphohistidine intermediate is His9. Glu87 acts as the Proton donor/acceptor in catalysis.

Belongs to the phosphoglycerate mutase family. BPG-dependent PGAM subfamily. As to quaternary structure, homodimer.

It catalyses the reaction (2R)-2-phosphoglycerate = (2R)-3-phosphoglycerate. It functions in the pathway carbohydrate degradation; glycolysis; pyruvate from D-glyceraldehyde 3-phosphate: step 3/5. Functionally, catalyzes the interconversion of 2-phosphoglycerate and 3-phosphoglycerate. The sequence is that of 2,3-bisphosphoglycerate-dependent phosphoglycerate mutase from Leptothrix cholodnii (strain ATCC 51168 / LMG 8142 / SP-6) (Leptothrix discophora (strain SP-6)).